Reading from the N-terminus, the 52-residue chain is Insulin (52 aa).

Intrachain disulfides connect C7/C38, C19/C51, and C37/C42.

It belongs to the insulin family. In terms of assembly, heterodimer of a B chain and an A chain linked by two disulfide bonds.

It is found in the secreted. In terms of biological role, insulin decreases blood glucose concentration. It increases cell permeability to monosaccharides, amino acids and fatty acids. It accelerates glycolysis, the pentose phosphate cycle, and glycogen synthesis in liver. This Acipenser gueldenstaedtii (Russian sturgeon) protein is Insulin (ins).